The following is a 444-amino-acid chain: Magnesium transporter MRS2-F (444 aa).

The interval 128 to 155 is disordered; it reads FTDMEGESSAVTSPFPALTSTTPNELEM. Over residues 145–155 the composition is skewed to polar residues; that stretch reads LTSTTPNELEM. Positions 195 to 258 form a coiled coil; the sequence is VCLESACRSL…QKVRDELEHL (64 aa). The chain crosses the membrane as a helical span at residues 370-390; that stretch reads GVMLSTATVVITAGVAVVGLF. A Required for magnesium transport activity motif is present at residues 391–393; sequence GMN. A helical membrane pass occupies residues 415-435; the sequence is FWETTLGTIAGCTVMYIVAMG.

This sequence belongs to the CorA metal ion transporter (MIT) (TC 1.A.35.5) family.

It is found in the membrane. In terms of biological role, magnesium transporter that may mediate the influx of magnesium. The polypeptide is Magnesium transporter MRS2-F (MRS2-F) (Oryza sativa subsp. indica (Rice)).